The primary structure comprises 234 residues: Ribosomal RNA small subunit methyltransferase G (234 aa).

S-adenosyl-L-methionine contacts are provided by residues Gly-74, Phe-79, 125–126 (AE), and Arg-144.

It belongs to the methyltransferase superfamily. RNA methyltransferase RsmG family.

It localises to the cytoplasm. In terms of biological role, specifically methylates the N7 position of a guanine in 16S rRNA. This is Ribosomal RNA small subunit methyltransferase G from Roseiflexus sp. (strain RS-1).